The chain runs to 749 residues: Phosphate-regulating neutral endopeptidase PHEX (749 aa).

Residues 1–20 lie on the Cytoplasmic side of the membrane; sequence MEAETGSTMETGKGTNRGIR. Residues 21 to 37 form a helical; Signal-anchor for type II membrane protein membrane-spanning segment; the sequence is IALALFIGGTLVLGTLL. The Extracellular segment spans residues 38–749; the sequence is FLVSQGLLSF…NRGADSCRLW (712 aa). The Peptidase M13 domain maps to 53-749; the sequence is YCLKPECIEA…NRGADSCRLW (697 aa). A disulfide bridge links Cys54 with Cys59. Asn71, Asn238, Asn263, Asn290, Asn301, Asn377, and Asn484 each carry an N-linked (GlcNAc...) asparagine glycan. Disulfide bonds link Cys77-Cys733, Cys85-Cys693, Cys142-Cys406, and Cys617-Cys746. His580 contacts Zn(2+). Glu581 is a catalytic residue. Zn(2+)-binding residues include His584 and Glu642. Asp646 acts as the Proton donor in catalysis. An N-linked (GlcNAc...) asparagine glycan is attached at Asn736.

The protein belongs to the peptidase M13 family. As to quaternary structure, interacts with MEPE; the interaction is zinc-dependent (via ASARM motif). Requires Zn(2+) as cofactor. In terms of processing, N-glycosylated. As to expression, expressed in bone, specifically in the osteoid and in osteocytes. Expressed in teeth, specifically in odontoblasts and ameloblasts. Expressed moderately by macrophages in the liver and has minimal expression in brown adipose tissue. Also expressed in suprabasal layers of the skin.

It is found in the cell membrane. In terms of biological role, peptidase that cleaves SIBLING (small integrin-binding ligand, N-linked glycoprotein)-derived ASARM peptides, thus regulating their biological activity. Cleaves ASARM peptides between Ser and Glu or Asp residues. Regulates osteogenic cell differentiation and bone mineralization through the cleavage of the MEPE-derived ASARM peptide. Promotes dentin mineralization and renal phosphate reabsorption by cleaving DMP1- and MEPE-derived ASARM peptides. Inhibits the cleavage of MEPE by CTSB/cathepsin B thus preventing MEPE degradation. The chain is Phosphate-regulating neutral endopeptidase PHEX (Phex) from Mus musculus (Mouse).